The sequence spans 452 residues: Prephenate dehydrogenase [NADP(+)] (452 aa).

Residue 14-43 (KVIGIIGLGDMGLLYANKFTDAGWGVICCD) coordinates NADP(+). In terms of domain architecture, Prephenate/arogenate dehydrogenase spans 14–297 (KVIGIIGLGD…GKHTGLLLLD (284 aa)).

The protein belongs to the prephenate/arogenate dehydrogenase family.

It catalyses the reaction prephenate + NADP(+) = 3-(4-hydroxyphenyl)pyruvate + CO2 + NADPH. It functions in the pathway amino-acid biosynthesis; L-tyrosine biosynthesis; (4-hydroxyphenyl)pyruvate from prephenate (NADP(+) route): step 1/1. The sequence is that of Prephenate dehydrogenase [NADP(+)] (TYR1) from Saccharomyces cerevisiae (strain ATCC 204508 / S288c) (Baker's yeast).